A 230-amino-acid chain; its full sequence is Ribosomal RNA small subunit methyltransferase G (230 aa).

S-adenosyl-L-methionine-binding positions include G93, L98, 144-145, and R158; that span reads IE.

The protein belongs to the methyltransferase superfamily. RNA methyltransferase RsmG family.

Its subcellular location is the cytoplasm. It carries out the reaction guanosine(527) in 16S rRNA + S-adenosyl-L-methionine = N(7)-methylguanosine(527) in 16S rRNA + S-adenosyl-L-homocysteine. Specifically methylates the N7 position of guanine in position 527 of 16S rRNA. This Bordetella parapertussis (strain 12822 / ATCC BAA-587 / NCTC 13253) protein is Ribosomal RNA small subunit methyltransferase G.